A 334-amino-acid chain; its full sequence is Short-chain dehydrogenase/reductase (334 aa).

The NADP(+) site is built by Leu-44, Lys-68, Asp-93, Asn-120, and Lys-152. Catalysis depends on proton donor residues Ser-176 and Tyr-205. Residues Tyr-205, Lys-209, and Asn-239 each coordinate NADP(+). Lys-209 acts as the Lowers pKa of active site Tyr in catalysis.

It belongs to the short-chain dehydrogenases/reductases (SDR) family.

Its pathway is mycotoxin biosynthesis. Short-chain dehydrogenase/reductase; part of the 2 gene clusters that mediate the biosynthesis of fusicoccins, diterpene glucosides that display phytohormone-like activity and function as potent activators of plasma membrane H(+)-ATPases in plants by modifying 14-3-3 proteins and cause the plant disease constriction canker. The first step in the pathway is performed by the fusicoccadiene synthase PaFS that possesses both prenyl transferase and terpene cyclase activity, converting isopentenyl diphosphate and dimethylallyl diphosphate into geranylgeranyl diphosphate (GGDP) and successively converting GGDP into fusicocca-2,10(14)-diene, a precursor for fusicoccin H. The second step is the oxidation at the C-8 position by the cytochrome P450 monooxygenase PaP450-2 to yield fusicocca-2,10(14)-diene-8-beta-ol. The cytochrome P450 monooxygenase PaP450-1 then catalyzes the hydroxylation at the C-16 position to produce fusicocca-2,10(14)-diene-8-beta,16-diol. The dioxygenase fc-dox then catalyzes the 16-oxydation of fusicocca-2,10(14)-diene-8-beta,16-diol to yield an aldehyde (8-beta-hydroxyfusicocca-1,10(14)-dien-16-al). The short-chain dehydrogenase/reductase fc-sdr catalyzes the reduction of the aldehyde to yield fusicocca-1,10(14)-diene-8-beta,16-diol. The next step is the hydroxylation at C-9 performed by the cytochrome P450 monooxygenase PaP450-3 that leads to fusicoccin H aglycon which is glycosylated to fusicoccin H by the O-glycosyltransferase PaGT. Hydroxylation at C-12 by the cytochrome P450 monooxygenase PaP450-4 leads then to the production of fusicoccin Q and is followed by methylation by the O-methyltransferase PaMT to yield fusicoccin P. Fusicoccin P is further converted to fusicoccin J via prenylation by the O-glucose prenyltransferase PaPT. Cytochrome P450 monooxygenase PaP450-5 then performs hydroxylation at C-19 to yield dideacetyl-fusicoccin A which is acetylated to 3'-O-deacetyl-fusicoccin A by the O-acetyltransferase PaAT-2. Finally, a another acetylation by the O-acetyltransferase PaAT-1 yields fusicoccin A. The polypeptide is Short-chain dehydrogenase/reductase (Phomopsis amygdali (Fusicoccum amygdali)).